The sequence spans 142 residues: Large ribosomal subunit protein bL17 (142 aa).

Belongs to the bacterial ribosomal protein bL17 family. As to quaternary structure, part of the 50S ribosomal subunit. Contacts protein L32.

The polypeptide is Large ribosomal subunit protein bL17 (Wolbachia pipientis wMel).